Here is a 301-residue protein sequence, read N- to C-terminus: MSAAAAETDVSLRRRSNSLNGNHTNGVAIDGTLDNNNRRVGDTNTHMDISAKKTDNGYANGVGGGGWRSKASFTTWTARDIVYVVRYHWIPCMFAAGLLFFMGVEYTLQMIPARSEPFDLGFVVTRSLNRVLASSPDLNTVLAALNTVFVGMQTTYIVWTWLVEGRARATIAALFMFTCRGILGYSTQLPLPQDFLGSGVDFPVGNVSFFLFFSGHVAGSMIASLDMRRMQRLRLAMVFDILNVLQSIRLLGTRGHYTIDLAVGVGAGILFDSLAGKYEEMMSKRHLGTGFSLISKDSLVN.

The tract at residues 1–39 (MSAAAAETDVSLRRRSNSLNGNHTNGVAIDGTLDNNNRR) is disordered. The next 5 helical transmembrane spans lie at 88–108 (HWIP…EYTL), 141–161 (VLAA…VWTW), 171–191 (IAAL…QLPL), 202–222 (FPVG…GSMI), and 255–275 (GHYT…DSLA). Catalysis depends on residues His-216, His-256, and Asp-260.

The protein belongs to the phosphatidylcholine:diacylglycerol cholinephosphotransferase family.

The protein resides in the membrane. The enzyme catalyses 1,2-ditetradecanoyl-sn-glycero-3-phosphocholine + 1,2-di-(9Z-octadecenoyl)-sn-glycerol = 1,2-ditetradecanoyl-sn-glycerol + 1,2-di-(9Z-octadecenoyl)-sn-glycero-3-phosphocholine. Functionally, functions as a phosphatidylcholine:diacylglycerol cholinephosphotransferase that catalyzes the transfer of the phosphocholine headgroup from phosphatidylcholine (PC) to diacylglycerol, a major reaction for the transfer of 18:1 into phosphatidylcholine for desaturation and also for the reverse transfer of 18:2 and 18:3 into the triacylglycerols synthesis pathway. The sequence is that of Phosphatidylcholine:diacylglycerol cholinephosphotransferase 1 from Arabidopsis thaliana (Mouse-ear cress).